A 214-amino-acid chain; its full sequence is Reticulon-3-B (214 aa).

A disordered region spans residues 1–22; it reads MAETSGPQSSHISSSSAGDKGS. The region spanning 26 to 214 is the Reticulon domain; the sequence is VRDLLYWRDV…LPGALKKKSE (189 aa). The next 2 helical transmembrane spans lie at 46–66 and 150–170; these read MVLLLSLAAFSIISVISYLVL and TYIGAVFNGITLLILGVLLAF.

As to quaternary structure, homodimer.

The protein localises to the endoplasmic reticulum membrane. Its subcellular location is the golgi apparatus membrane. Functionally, may be involved in membrane trafficking in the early secretory pathway. This Xenopus laevis (African clawed frog) protein is Reticulon-3-B (rtn3-b).